A 183-amino-acid polypeptide reads, in one-letter code: MGSSFVIDRSSSSPAPPRGPAPKLSAHARKIICKISPNRSFLFIISLHICEKYFISMGLRGHRSRFSRSVSTFFSPGKLACIAHLRVGCQIVPIFPYGAFLKTPYNRCAGNKVSESTHRRAVVRPSTRYFVTTFQDTETQLIIVSSVEVKKRKGIVILSIEFQSMHLKQRVDHQVDFLGNKIL.

Residues 1–23 form a disordered region; sequence MGSSFVIDRSSSSPAPPRGPAPK.

This is an uncharacterized protein from Saccharomyces cerevisiae (strain ATCC 204508 / S288c) (Baker's yeast).